The chain runs to 476 residues: Proline--tRNA ligase (476 aa).

It belongs to the class-II aminoacyl-tRNA synthetase family. ProS type 3 subfamily. In terms of assembly, homodimer.

It localises to the cytoplasm. It carries out the reaction tRNA(Pro) + L-proline + ATP = L-prolyl-tRNA(Pro) + AMP + diphosphate. Functionally, catalyzes the attachment of proline to tRNA(Pro) in a two-step reaction: proline is first activated by ATP to form Pro-AMP and then transferred to the acceptor end of tRNA(Pro). This chain is Proline--tRNA ligase, found in Rubrobacter xylanophilus (strain DSM 9941 / JCM 11954 / NBRC 16129 / PRD-1).